We begin with the raw amino-acid sequence, 139 residues long: MEDKNILVEGFNQLSQQALELSQHAQALALQASHAVLPAAAATEGASEFWWLMTVFVLACFIGFYVVWSVTPALHSPLMGVTNAISSVIVVGALIATGPEAFSASKVLGFFAILLASVNIFGGFIVTQRMLAMFKKKQK.

3 consecutive transmembrane segments (helical) span residues 49–69 (FWWL…VVWS), 78–98 (LMGV…IATG), and 107–127 (VLGF…FIVT).

Complex of an alpha and a beta chain; in Rhodospirillum, the alpha chain seems to be made of two subunits.

Its subcellular location is the cell inner membrane. The enzyme catalyses NAD(+) + NADPH + H(+)(in) = NADH + NADP(+) + H(+)(out). Functionally, the transhydrogenation between NADH and NADP is coupled to respiration and ATP hydrolysis and functions as a proton pump across the membrane. The polypeptide is NAD(P) transhydrogenase subunit alpha part 2 (pntAB) (Rhodospirillum rubrum (strain ATCC 11170 / ATH 1.1.1 / DSM 467 / LMG 4362 / NCIMB 8255 / S1)).